Reading from the N-terminus, the 373-residue chain is Flagellar biosynthesis protein FlhF (373 aa).

GTP is bound by residues 179–186, 255–259, and 312–315; these read GPTGVGKT, DTAGR, and TKLD.

This sequence belongs to the GTP-binding SRP family.

Its subcellular location is the cell membrane. Necessary for flagellar biosynthesis. May be involved in translocation of the flagellum. This is Flagellar biosynthesis protein FlhF (flhF) from Aquifex aeolicus (strain VF5).